Reading from the N-terminus, the 304-residue chain is ATP synthase gamma chain (304 aa).

It belongs to the ATPase gamma chain family. F-type ATPases have 2 components, CF(1) - the catalytic core - and CF(0) - the membrane proton channel. CF(1) has five subunits: alpha(3), beta(3), gamma(1), delta(1), epsilon(1). CF(0) has three main subunits: a, b and c.

It is found in the cell membrane. In terms of biological role, produces ATP from ADP in the presence of a proton gradient across the membrane. The gamma chain is believed to be important in regulating ATPase activity and the flow of protons through the CF(0) complex. The chain is ATP synthase gamma chain from Mycobacterium ulcerans (strain Agy99).